The chain runs to 1193 residues: Protein diaphanous homolog 3 (1193 aa).

The segment covering 1–10 (MERHQPRLHH) has biased composition (basic residues). The disordered stretch occupies residues 1–57 (MERHQPRLHHPAQGSAAGTPYPSSASLRGCRESKMPRRKGPQHPPPPSGPEEPGEKR). Position 26 is a phosphoserine (S26). The Nuclear localization signal motif lies at 36–60 (PRRKGPQHPPPPSGPEEPGEKRPKF). T68 carries the phosphothreonine modification. Residues S77 and S175 each carry the phosphoserine modification. The GBD/FH3 domain maps to 114–476 (PKPLSENELL…QIVLHRDGMD (363 aa)). The stretch at 497–554 (IDQAKLEEFEEKASELYKKFEKEFTDHQETQAELQKKEAKINELQAELQAFKSQFGAL) forms a coiled coil. The disordered stretch occupies residues 558–622 (CNIPLPPSKE…PPPLGFLGGQ (65 aa)). Positions 561-631 (PLPPSKEGGT…QNSPPLPILP (71 aa)) constitute an FH1 domain. The segment covering 575–600 (LPPPPPLPSGGGVPPPPPPPPPPPLP) has biased composition (pro residues). Position 624 is a phosphoserine (S624). The FH2 domain maps to 636-1034 (PKKEFKPEIS…EKRVRIAKEL (399 aa)). Positions 1013-1056 (KENIKKREAEEKEKRVRIAKELAERERLERQQKKKRLLEMKTEG) form a coiled coil. Residues 1057–1087 (DETGVMDNLLEALQSGAAFRDRRKRTPMPKD) enclose the DAD domain. 2 positions are modified to phosphoserine: S1093 and S1179. The Nuclear export signal motif lies at 1184–1193 (EALLARLRAL).

This sequence belongs to the formin homology family. Diaphanous subfamily. Ubiquitinated.

Its subcellular location is the cytoplasm. It is found in the nucleus. Functionally, actin nucleation and elongation factor required for the assembly of F-actin structures, such as actin cables and stress fibers. Required for cytokinesis, stress fiber formation and transcriptional activation of the serum response factor. Binds to GTP-bound form of Rho and to profilin: acts in a Rho-dependent manner to recruit profilin to the membrane, where it promotes actin polymerization. DFR proteins couple Rho and Src tyrosine kinase during signaling and the regulation of actin dynamics. Also acts as an actin nucleation and elongation factor in the nucleus by promoting nuclear actin polymerization inside the nucleus to drive serum-dependent SRF-MRTFA activity. The protein is Protein diaphanous homolog 3 (DIAPH3) of Homo sapiens (Human).